We begin with the raw amino-acid sequence, 209 residues long: Kynurenine formamidase (209 aa).

Trp18 lines the substrate pocket. Positions 48, 52, and 54 each coordinate Zn(2+). The Proton donor/acceptor role is filled by His58. His160 and Glu172 together coordinate Zn(2+).

It belongs to the Cyclase 1 superfamily. KynB family. In terms of assembly, homodimer. The cofactor is Zn(2+).

It carries out the reaction N-formyl-L-kynurenine + H2O = L-kynurenine + formate + H(+). Its pathway is amino-acid degradation; L-tryptophan degradation via kynurenine pathway; L-kynurenine from L-tryptophan: step 2/2. Its function is as follows. Catalyzes the hydrolysis of N-formyl-L-kynurenine to L-kynurenine, the second step in the kynurenine pathway of tryptophan degradation. This chain is Kynurenine formamidase, found in Sphingopyxis alaskensis (strain DSM 13593 / LMG 18877 / RB2256) (Sphingomonas alaskensis).